The chain runs to 515 residues: Cytochrome P450 2D7 (515 aa).

Over 1-2 the chain is Extracellular; the sequence is MG. Residues 3–23 form a helical membrane-spanning segment; the sequence is LEALVPLAMIVAIFLLLVDLM. Residues 24 to 301 lie on the Cytoplasmic side of the membrane; it reads HRHQRWAARY…DENLRIVVGN (278 aa). The chain crosses the membrane as a helical span at residues 302–322; that stretch reads LFLAGMVTTSTTLAWGLLLMI. Over 323 to 515 the chain is Extracellular; sequence LHLDVQRGRR…SPYELCAVPR (193 aa). A glycan (N-linked (GlcNAc...) asparagine) is linked at N416. Residue C461 participates in heme binding.

Belongs to the cytochrome P450 family. Requires heme as cofactor. In terms of tissue distribution, expressed in brain cortex (at protein level).

The protein resides in the membrane. It is found in the cytoplasm. Its subcellular location is the mitochondrion. The enzyme catalyses an organic molecule + reduced [NADPH--hemoprotein reductase] + O2 = an alcohol + oxidized [NADPH--hemoprotein reductase] + H2O + H(+). In terms of biological role, may be responsible for the metabolism of many drugs and environmental chemicals that it oxidizes. It may be involved in the metabolism of codeine to morphine. However, another study could not confirm it. This chain is Cytochrome P450 2D7, found in Homo sapiens (Human).